We begin with the raw amino-acid sequence, 302 residues long: Lipoyl synthase (302 aa).

7 residues coordinate [4Fe-4S] cluster: C44, C49, C55, C70, C74, C77, and S283. Residues 56 to 272 (WSKKHATVMI…ARVAKSKGFL (217 aa)) enclose the Radical SAM core domain.

This sequence belongs to the radical SAM superfamily. Lipoyl synthase family. It depends on [4Fe-4S] cluster as a cofactor.

It is found in the cytoplasm. The catalysed reaction is [[Fe-S] cluster scaffold protein carrying a second [4Fe-4S](2+) cluster] + N(6)-octanoyl-L-lysyl-[protein] + 2 oxidized [2Fe-2S]-[ferredoxin] + 2 S-adenosyl-L-methionine + 4 H(+) = [[Fe-S] cluster scaffold protein] + N(6)-[(R)-dihydrolipoyl]-L-lysyl-[protein] + 4 Fe(3+) + 2 hydrogen sulfide + 2 5'-deoxyadenosine + 2 L-methionine + 2 reduced [2Fe-2S]-[ferredoxin]. Its pathway is protein modification; protein lipoylation via endogenous pathway; protein N(6)-(lipoyl)lysine from octanoyl-[acyl-carrier-protein]: step 2/2. Functionally, catalyzes the radical-mediated insertion of two sulfur atoms into the C-6 and C-8 positions of the octanoyl moiety bound to the lipoyl domains of lipoate-dependent enzymes, thereby converting the octanoylated domains into lipoylated derivatives. This chain is Lipoyl synthase, found in Orientia tsutsugamushi (strain Ikeda) (Rickettsia tsutsugamushi).